The chain runs to 127 residues: MYRTLMSAKLHRARVTEANLNYVGSVTIDEDLLDAVGMMANEKVQIVNNNNGARLETYIIPGERGSGVVCLNGAAARLVQVGDVVIIVSYAMMSEEEAKTHKPKVAVLNERNEIEEMLGQEPARTIL.

Catalysis depends on serine 25, which acts as the Schiff-base intermediate with substrate; via pyruvic acid. Serine 25 is subject to Pyruvic acid (Ser). Threonine 57 lines the substrate pocket. Residue tyrosine 58 is the Proton donor of the active site. Residue 73-75 (GAA) participates in substrate binding.

It belongs to the PanD family. In terms of assembly, heterooctamer of four alpha and four beta subunits. It depends on pyruvate as a cofactor. Post-translationally, is synthesized initially as an inactive proenzyme, which is activated by self-cleavage at a specific serine bond to produce a beta-subunit with a hydroxyl group at its C-terminus and an alpha-subunit with a pyruvoyl group at its N-terminus.

The protein localises to the cytoplasm. It carries out the reaction L-aspartate + H(+) = beta-alanine + CO2. The protein operates within cofactor biosynthesis; (R)-pantothenate biosynthesis; beta-alanine from L-aspartate: step 1/1. Functionally, catalyzes the pyruvoyl-dependent decarboxylation of aspartate to produce beta-alanine. This chain is Aspartate 1-decarboxylase, found in Bacillus licheniformis (strain ATCC 14580 / DSM 13 / JCM 2505 / CCUG 7422 / NBRC 12200 / NCIMB 9375 / NCTC 10341 / NRRL NRS-1264 / Gibson 46).